The following is a 30-amino-acid chain: Acyl-CoA-binding protein 1 (30 aa).

Over residues 1–15 the composition is skewed to basic and acidic residues; it reads ALKDEFEEHAEKAKT. The segment at 1 to 30 is disordered; sequence ALKDEFEEHAEKAKTLPENTSNENKLILYG. The ACB domain maps to 2-30; sequence LKDEFEEHAEKAKTLPENTSNENKLILYG.

It belongs to the ACBP family.

It localises to the cytoplasm. In terms of biological role, binds medium- and long-chain acyl-CoA esters with very high affinity and may function as an intracellular carrier of acyl-CoA esters. The sequence is that of Acyl-CoA-binding protein 1 from Digitalis lanata (Grecian foxglove).